Consider the following 768-residue polypeptide: Calcium up-regulated protein G (768 aa).

The tract at residues 1–22 (MINIEDISKSSNQSEEKQLKST) is disordered. Ricin B-type lectin domains follow at residues 1-107 (MINI…WTID) and 100-248 (KTQI…WGIN).

The protein belongs to the cup family.

It is found in the cytoplasm. The protein resides in the membrane. In terms of biological role, may play an important role in stabilizing and/or regulating the cell membrane during Ca(2+) stress or certain stages of development. In Dictyostelium discoideum (Social amoeba), this protein is Calcium up-regulated protein G (cupG).